We begin with the raw amino-acid sequence, 431 residues long: ETS domain-containing protein Elk-4 (431 aa).

The segment at residues 5–85 (ITLWQFLLQL…NGQKFVYKFV (81 aa)) is a DNA-binding region (ETS). The disordered stretch occupies residues 114–139 (SSSSKDVENGGKDKPPQPGAKTSSRN). The segment covering 118–128 (KDVENGGKDKP) has biased composition (basic and acidic residues). Lysine 167 participates in a covalent cross-link: Glycyl lysine isopeptide (Lys-Gly) (interchain with G-Cter in SUMO2). Serine 180 carries the post-translational modification Phosphoserine. Disordered regions lie at residues 251 to 282 (TTPP…DTDI), 294 to 323 (ENLS…KKPK), and 411 to 431 (TLSG…LQKT). Positions 261–273 (LQEPPRTPSPPLS) are enriched in pro residues. A compositionally biased stretch (basic and acidic residues) spans 299–313 (EPKDQDSVLLEKDKV).

Belongs to the ETS family. As to quaternary structure, interacts with SIRT7.

The protein localises to the nucleus. Functionally, involved in both transcriptional activation and repression. Interaction with SIRT7 leads to recruitment and stabilization of SIRT7 at promoters, followed by deacetylation of histone H3 at 'Lys-18' (H3K18Ac) and subsequent transcription repression. Forms a ternary complex with the serum response factor (SRF). Requires DNA-bound SRF for ternary complex formation and makes extensive DNA contacts to the 5'side of SRF, but does not bind DNA autonomously. The chain is ETS domain-containing protein Elk-4 (ELK4) from Homo sapiens (Human).